The sequence spans 282 residues: Farnesyl diphosphate synthase (282 aa).

Isopentenyl diphosphate-binding residues include Lys45, Arg48, and His77. Mg(2+)-binding residues include Asp84 and Asp90. Arg95 lines the (2E)-geranyl diphosphate pocket. Arg96 is a binding site for isopentenyl diphosphate. (2E)-geranyl diphosphate-binding residues include Lys181, Thr182, and Gln220.

Belongs to the FPP/GGPP synthase family. It depends on Mg(2+) as a cofactor.

Its subcellular location is the cytoplasm. It carries out the reaction isopentenyl diphosphate + (2E)-geranyl diphosphate = (2E,6E)-farnesyl diphosphate + diphosphate. This Buchnera aphidicola subsp. Acyrthosiphon pisum (strain APS) (Acyrthosiphon pisum symbiotic bacterium) protein is Farnesyl diphosphate synthase (ispA).